A 284-amino-acid polypeptide reads, in one-letter code: Pantothenate synthetase (284 aa).

Residue 32 to 39 (MGALHDGH) coordinates ATP. His39 acts as the Proton donor in catalysis. A (R)-pantoate-binding site is contributed by Gln63. Gln63 is a beta-alanine binding site. 149–152 (GEKD) serves as a coordination point for ATP. Gln155 provides a ligand contact to (R)-pantoate. ATP-binding positions include Ile178 and 186 to 189 (MSSR).

The protein belongs to the pantothenate synthetase family. In terms of assembly, homodimer.

It localises to the cytoplasm. It catalyses the reaction (R)-pantoate + beta-alanine + ATP = (R)-pantothenate + AMP + diphosphate + H(+). The protein operates within cofactor biosynthesis; (R)-pantothenate biosynthesis; (R)-pantothenate from (R)-pantoate and beta-alanine: step 1/1. Catalyzes the condensation of pantoate with beta-alanine in an ATP-dependent reaction via a pantoyl-adenylate intermediate. The sequence is that of Pantothenate synthetase from Roseobacter denitrificans (strain ATCC 33942 / OCh 114) (Erythrobacter sp. (strain OCh 114)).